A 134-amino-acid polypeptide reads, in one-letter code: ATP synthase epsilon chain (134 aa).

It belongs to the ATPase epsilon chain family. As to quaternary structure, F-type ATPases have 2 components, CF(1) - the catalytic core - and CF(0) - the membrane proton channel. CF(1) has five subunits: alpha(3), beta(3), gamma(1), delta(1), epsilon(1). CF(0) has three main subunits: a, b and c.

The protein localises to the cellular thylakoid membrane. Produces ATP from ADP in the presence of a proton gradient across the membrane. This chain is ATP synthase epsilon chain, found in Prochlorococcus marinus (strain MIT 9215).